The chain runs to 340 residues: Dihydroorotate dehydrogenase (quinone) (340 aa).

Residues 61 to 65 (AGLDK) and threonine 85 each bind FMN. Lysine 65 contacts substrate. 110–114 (NRMGF) contacts substrate. 2 residues coordinate FMN: asparagine 138 and asparagine 171. Substrate is bound at residue asparagine 171. The active-site Nucleophile is serine 174. A substrate-binding site is contributed by asparagine 176. 2 residues coordinate FMN: lysine 216 and threonine 244. 245-246 (NT) is a binding site for substrate. FMN is bound by residues glycine 267, glycine 296, and 317–318 (YS).

Belongs to the dihydroorotate dehydrogenase family. Type 2 subfamily. As to quaternary structure, monomer. Requires FMN as cofactor.

The protein resides in the cell membrane. It carries out the reaction (S)-dihydroorotate + a quinone = orotate + a quinol. It functions in the pathway pyrimidine metabolism; UMP biosynthesis via de novo pathway; orotate from (S)-dihydroorotate (quinone route): step 1/1. Its function is as follows. Catalyzes the conversion of dihydroorotate to orotate with quinone as electron acceptor. This is Dihydroorotate dehydrogenase (quinone) from Ectopseudomonas mendocina (strain ymp) (Pseudomonas mendocina).